Consider the following 245-residue polypeptide: MYPVDLHMHTVASTHAYSTLSDYIAQAKQKGIKLFAITDHGPDMEDAPHHWHFINMRIWPRVVDGVGILRGIEANIKNVDGEIDCSGKMFDSLDLIIAGFHEPVFAPHDKATNTQAMISTIASGNVHIISHPGNPKYEIDVKAVAEAAAKHQVALEINNSSFLHSRKGSEDNCRAVAAAVRDAGGWVALGSDSHTAFTMGEFEECLKILDAVDFPLERILNVSPRRLLNFLESRGMAPIAEFADL.

9 residues coordinate Zn(2+): His-7, His-9, His-15, His-40, Glu-73, His-101, His-131, Asp-192, and His-194.

The protein belongs to the PHP family. Homotrimer. The cofactor is Zn(2+).

This Shigella flexneri serotype 5b (strain 8401) protein is Probable phosphatase YcdX.